A 759-amino-acid chain; its full sequence is Rho GTPase-activating protein 26 (759 aa).

In terms of domain architecture, BAR spans 7 to 262 (EFSDCYLDSP…MKENPHEHLA (256 aa)). The PH domain maps to 265 to 369 (PYTMEGYLYV…WMEAMDGREP (105 aa)). A Rho-GAP domain is found at 383-568 (AQLDNIGFSI…IIIENYEKMF (186 aa)). Positions 578-701 (NSQLHLSRKR…STSSDSSPVS (124 aa)) are disordered. Positions 608-617 (HNTEKEEKRN) are enriched in basic and acidic residues. Residues 618–637 (SVNSSAESVSSSNANSSANS) show a composition bias toward low complexity. Over residues 638–650 (TCTQCSNMNNLNA) the composition is skewed to polar residues. The span at 679–701 (PMFSAPSSPMPTSSTSSDSSPVS) shows a compositional bias: low complexity. One can recognise an SH3 domain in the interval 701-759 (SVPRKAKALYACKAEHDSELSFSAGTVFDNVYPSQEPGWLEGILNGKTGLIPENYVEFL).

The protein localises to the cell junction. Its subcellular location is the focal adhesion. It is found in the cytoplasm. The protein resides in the cytoskeleton. It localises to the endosome membrane. Functionally, GTPase-activating protein for rhoa and cdc42. The protein is Rho GTPase-activating protein 26 (arhgap26) of Xenopus tropicalis (Western clawed frog).